The following is a 115-amino-acid chain: MKKKHRIKKNDEFQTVFQKGKSNANRQFVVYQLDKEEQPNFRIGLSVSKKIGNAVVRNRIKRMIRQSITELKDEIDSGKDFVIIARKPCAEMTYEELKKSLIHVFKRSGMKRIKK.

This sequence belongs to the RnpA family. As to quaternary structure, consists of a catalytic RNA component (M1 or rnpB) and a protein subunit.

The enzyme catalyses Endonucleolytic cleavage of RNA, removing 5'-extranucleotides from tRNA precursor.. Functionally, RNaseP catalyzes the removal of the 5'-leader sequence from pre-tRNA to produce the mature 5'-terminus. It can also cleave other RNA substrates such as 4.5S RNA. The protein component plays an auxiliary but essential role in vivo by binding to the 5'-leader sequence and broadening the substrate specificity of the ribozyme. This Bacillus cereus (strain ATCC 10987 / NRS 248) protein is Ribonuclease P protein component.